Here is a 358-residue protein sequence, read N- to C-terminus: Glycerophosphodiester phosphodiesterase, periplasmic (358 aa).

Residues M1–A25 form the signal peptide. In terms of domain architecture, GP-PDE spans K31–L355. The active-site Proton acceptor is H36. Ca(2+)-binding residues include E63 and D65. Catalysis depends on H78, which acts as the Proton donor. A Ca(2+)-binding site is contributed by E171.

The protein belongs to the glycerophosphoryl diester phosphodiesterase family. Homodimer. Ca(2+) serves as cofactor.

The protein resides in the periplasm. The enzyme catalyses a sn-glycero-3-phosphodiester + H2O = an alcohol + sn-glycerol 3-phosphate + H(+). Functionally, glycerophosphodiester phosphodiesterase hydrolyzes glycerophosphodiesters into glycerol-3-phosphate (G3P) and the corresponding alcohol. The sequence is that of Glycerophosphodiester phosphodiesterase, periplasmic (glpQ) from Escherichia coli (strain K12).